The following is a 273-amino-acid chain: MAEHGSRVSLHGFNNLTKSLSFNIYDVCYAKTAEQRHAYIEYIDEVYNAERLTQILTDVADIIGANILNIARQDYEPQGASVTILISEEPVSEAVAEAADQVGPGPLPETVLGHLDKSHITVHTYPESHPDHGVSTFRADIDVSTCGVISPLKALNYLIHSFDSDIVTMDYRVRGFTRDVRGRKHFIDHDINSIQNYLADDTKERYHTIDVNVFQENLFHTKMMVRELDLENYLFGESAGNLEPAERREIERQLRREMTEIFAGRNLAPDQEV.

The active-site Schiff-base intermediate with substrate; via pyruvic acid is serine 118. Serine 118 carries the pyruvic acid (Ser); by autocatalysis modification. Residue histidine 123 is the Proton acceptor; for processing activity of the active site. The active-site Proton donor; for catalytic activity is the cysteine 146.

This sequence belongs to the prokaryotic AdoMetDC family. Type 2 subfamily. As to quaternary structure, heterooctamer of four alpha and four beta chains arranged as a tetramer of alpha/beta heterodimers. It depends on pyruvate as a cofactor. Post-translationally, is synthesized initially as an inactive proenzyme. Formation of the active enzyme involves a self-maturation process in which the active site pyruvoyl group is generated from an internal serine residue via an autocatalytic post-translational modification. Two non-identical subunits are generated from the proenzyme in this reaction, and the pyruvate is formed at the N-terminus of the alpha chain, which is derived from the carboxyl end of the proenzyme. The post-translation cleavage follows an unusual pathway, termed non-hydrolytic serinolysis, in which the side chain hydroxyl group of the serine supplies its oxygen atom to form the C-terminus of the beta chain, while the remainder of the serine residue undergoes an oxidative deamination to produce ammonia and the pyruvoyl group blocking the N-terminus of the alpha chain.

The catalysed reaction is S-adenosyl-L-methionine + H(+) = S-adenosyl 3-(methylsulfanyl)propylamine + CO2. It functions in the pathway amine and polyamine biosynthesis; S-adenosylmethioninamine biosynthesis; S-adenosylmethioninamine from S-adenosyl-L-methionine: step 1/1. Functionally, catalyzes the decarboxylation of S-adenosylmethionine to S-adenosylmethioninamine (dcAdoMet), the propylamine donor required for the synthesis of the polyamines spermine and spermidine from the diamine putrescine. The polypeptide is S-adenosylmethionine decarboxylase proenzyme (Alkalilimnicola ehrlichii (strain ATCC BAA-1101 / DSM 17681 / MLHE-1)).